A 204-amino-acid chain; its full sequence is MIGRLRGILLEKQPPELLIEVNGIGYEVQMPMSCFYELPNIGEEAIIYTHFVVREDAQLLYGFNTVKERALFREVIKANGVGPKLGLAILSGMTASQFVASVEREDISTLVKLPGVGKKTAERLVVEMKDRLKGWSAGDLFTPFTDAAPVDSGSTSSNSAEEEAVSALLALGYKPVQASKVVSQIAKPDMTSEQLIREALKSMV.

The tract at residues Met-1–Asn-64 is domain I. Residues Thr-65 to Pro-143 are domain II. The interval Phe-144–Thr-155 is flexible linker. The segment at Ser-156 to Val-204 is domain III.

It belongs to the RuvA family. As to quaternary structure, homotetramer. Forms an RuvA(8)-RuvB(12)-Holliday junction (HJ) complex. HJ DNA is sandwiched between 2 RuvA tetramers; dsDNA enters through RuvA and exits via RuvB. An RuvB hexamer assembles on each DNA strand where it exits the tetramer. Each RuvB hexamer is contacted by two RuvA subunits (via domain III) on 2 adjacent RuvB subunits; this complex drives branch migration. In the full resolvosome a probable DNA-RuvA(4)-RuvB(12)-RuvC(2) complex forms which resolves the HJ.

The protein resides in the cytoplasm. Its function is as follows. The RuvA-RuvB-RuvC complex processes Holliday junction (HJ) DNA during genetic recombination and DNA repair, while the RuvA-RuvB complex plays an important role in the rescue of blocked DNA replication forks via replication fork reversal (RFR). RuvA specifically binds to HJ cruciform DNA, conferring on it an open structure. The RuvB hexamer acts as an ATP-dependent pump, pulling dsDNA into and through the RuvAB complex. HJ branch migration allows RuvC to scan DNA until it finds its consensus sequence, where it cleaves and resolves the cruciform DNA. The sequence is that of Holliday junction branch migration complex subunit RuvA from Vibrio vulnificus (strain CMCP6).